A 298-amino-acid chain; its full sequence is GTPase Era (298 aa).

Residues 3-170 enclose the Era-type G domain; sequence KSGFVAILGR…VQLLKDNLEE (168 aa). The interval 11-18 is G1; sequence GRPNVGKS. 11 to 18 provides a ligand contact to GTP; the sequence is GRPNVGKS. The G2 stretch occupies residues 37–41; sequence QTTRN. The tract at residues 58–61 is G3; it reads DTPG. GTP-binding positions include 58-62 and 120-123; these read DTPGI and NKID. Positions 120-123 are G4; that stretch reads NKID. Positions 149 to 151 are G5; the sequence is ISA. The 79-residue stretch at 201–279 folds into the KH type-2 domain; it reads TQQEVPHSVA…YLETWVKVKK (79 aa).

It belongs to the TRAFAC class TrmE-Era-EngA-EngB-Septin-like GTPase superfamily. Era GTPase family. As to quaternary structure, monomer.

The protein resides in the cytoplasm. It is found in the cell membrane. In terms of biological role, an essential GTPase that binds both GDP and GTP, with rapid nucleotide exchange. Plays a role in 16S rRNA processing and 30S ribosomal subunit biogenesis and possibly also in cell cycle regulation and energy metabolism. The polypeptide is GTPase Era (Streptococcus equi subsp. equi (strain 4047)).